We begin with the raw amino-acid sequence, 183 residues long: Peptide deformylase-like (183 aa).

Residue E140 is part of the active site.

It belongs to the polypeptide deformylase family.

This Rickettsia conorii (strain ATCC VR-613 / Malish 7) protein is Peptide deformylase-like.